The primary structure comprises 232 residues: Protein UL24 homolog (232 aa).

Positions 191–232 are disordered; that stretch reads PQKELFGIHKPENSEVETVGATKSTRKGAEKSRLSRRSRKSN.

The protein belongs to the herpesviridae UL24 family.

Its subcellular location is the virion. It localises to the host cytoplasm. It is found in the host nucleus. The protein localises to the host nucleolus. The protein resides in the host Golgi apparatus. In terms of biological role, may participate in nuclear egress of viral particles. Plays a role in the dispersal of several host nucleolar proteins including NCL/nucleolin and NPM1. Since deletion of host NCL/nucleolin negatively impact on nuclear egress, UL24 supposedly acts on this process through its effect on host nucleoli. This chain is Protein UL24 homolog, found in Elephas maximus (Indian elephant).